The following is a 248-amino-acid chain: Putative glutamine amidotransferase-like protein C13C5.04 (248 aa).

The 205-residue stretch at 13 to 217 (PMVEITSAYG…VKVLRGTEVF (205 aa)) folds into the Glutamine amidotransferase type-1 domain.

The polypeptide is Putative glutamine amidotransferase-like protein C13C5.04 (Schizosaccharomyces pombe (strain 972 / ATCC 24843) (Fission yeast)).